Here is a 648-residue protein sequence, read N- to C-terminus: NAD(P)H-quinone oxidoreductase subunit 5, chloroplastic (648 aa).

Helical transmembrane passes span 7-27 (AIWLIPVLPLSASMLSGIGLL), 39-59 (LHGALAIGAMALSFVVSLGVL), 89-109 (VDPLTSTMLVVVTSVALLVMI), 124-144 (FFVYLSIFTTSMLGLVLSPNL), 147-167 (VYGFWELVGMCSYLLVGFWFT), 189-209 (LLLGILALYWMTGSFEFASIA), 215-235 (LLIAIPSLRTIACIACILVFM), 258-278 (TPISALIHAATMVAAGVFLVA), 289-309 (LVMELIAWTGTLTAFLGATMA), 327-347 (LGYMIMALGTGAYSEALFHLT), 354-374 (ALLFLAAGSVIHGMEPVVGFS), 395-415 (AMTFLLGTCSICGIPPLACFW), 432-452 (WLIAWLTAGMTGFYMFRIYFL), 472-492 (LGMVAPLIILAIPTVAIGSLG), 518-538 (LAEFLEMAGSSVGIGLLGISL), and 625-645 (FYILSIIFGVLFGSWLLTTHL).

Belongs to the complex I subunit 5 family. In terms of assembly, NDH is composed of at least 16 different subunits, 5 of which are encoded in the nucleus.

Its subcellular location is the plastid. It is found in the chloroplast thylakoid membrane. It carries out the reaction a plastoquinone + NADH + (n+1) H(+)(in) = a plastoquinol + NAD(+) + n H(+)(out). It catalyses the reaction a plastoquinone + NADPH + (n+1) H(+)(in) = a plastoquinol + NADP(+) + n H(+)(out). Functionally, NDH shuttles electrons from NAD(P)H:plastoquinone, via FMN and iron-sulfur (Fe-S) centers, to quinones in the photosynthetic chain and possibly in a chloroplast respiratory chain. The immediate electron acceptor for the enzyme in this species is believed to be plastoquinone. Couples the redox reaction to proton translocation, and thus conserves the redox energy in a proton gradient. The sequence is that of NAD(P)H-quinone oxidoreductase subunit 5, chloroplastic (ndhF) from Nephroselmis olivacea (Green alga).